The following is a 1784-amino-acid chain: Sodium channel protein type 4 subunit alpha B (1784 aa).

The Cytoplasmic segment spans residues 1–130 (MARLLPPTGT…RAAIRILIHS (130 aa)). Residues 29-48 (AEEAAEQERMKEQNVKVAEE) are disordered. Residues 112–429 (CLSPFNPVRR…VVAMAYAEQN (318 aa)) form an I repeat. Residues 131–149 (LFSLVIMLTILTNCVFMAM) traverse the membrane as a helical segment. The Extracellular portion of the chain corresponds to 150–156 (SDPPGWS). A helical membrane pass occupies residues 157 to 177 (KILEYVFTGIYTFEAMVKVLS). Topologically, residues 178–191 (RGFCIGDFTFLRDP) are cytoplasmic. A helical membrane pass occupies residues 192-209 (WNWLDFMVISMAYLTEFV). Over 210–215 (DLGNIS) the chain is Extracellular. N213 carries N-linked (GlcNAc...) asparagine glycosylation. The helical transmembrane segment at 216–232 (ALRTFRVLRALKTITVI) threads the bilayer. The Cytoplasmic portion of the chain corresponds to 233 to 251 (PGLKTIVGALIQSVKKLAD). The helical transmembrane segment at 252–271 (VMILTVFCLSVFALIGLQLF) threads the bilayer. Over 272–366 (MGNLRQKCVL…PNYGYTSYDN (95 aa)) the chain is Extracellular. An intrachain disulfide couples C279 to C335. 3 N-linked (GlcNAc...) asparagine glycosylation sites follow: N291, N304, and N337. C344 and C350 form a disulfide bridge. Positions 367–391 (FGWAFLALFRLMTQDFWENLFQLTL) form an intramembrane region, pore-forming. The Extracellular portion of the chain corresponds to 392–398 (RAAGKTY). The helical transmembrane segment at 399–419 (MIFFVVIIFLGSFYLINLILA) threads the bilayer. Residues 420–568 (VVAMAYAEQN…RIVYLFVMDP (149 aa)) are Cytoplasmic-facing. The tract at residues 455 to 478 (EQKNGMVNGSKTSLSSKKKGDNDQ) is disordered. The stretch at 550–821 (CCIPWVKFKR…QIAISRITRG (272 aa)) is one II repeat. Residues 569-587 (FVDLGITLCIVLNTVFMAM) form a helical membrane-spanning segment. Topologically, residues 588 to 598 (EHYPMSVHVEE) are extracellular. The chain crosses the membrane as a helical span at residues 599–618 (VLAIGNLVFTGIFAAEMVLK). Residues 619–632 (LIALDPYYYFQVGW) lie on the Cytoplasmic side of the membrane. Residues 633–652 (NIFDSIIVTMSLVELMLADV) traverse the membrane as a helical segment. The Extracellular portion of the chain corresponds to 653-654 (EG). Residues 655–672 (LSVLRSFRLMRVFKLAKS) traverse the membrane as a helical segment. The Cytoplasmic portion of the chain corresponds to 673–688 (WPTLNMLIKIIGNSVG). A helical membrane pass occupies residues 689–707 (ALGNLTLVLAIIVFIFAVV). Residues 708-736 (GMQLFGKSYTDSVCKISSDCELPRWHMAD) lie on the Extracellular side of the membrane. C721 and C727 are oxidised to a cystine. Residues 737 to 757 (FFHAFLIIFRVLCGEWIETMW) constitute an intramembrane region (pore-forming). Topologically, residues 758–768 (DCMEVAGQGMC) are extracellular. A disulfide bridge connects residues C759 and C768. The helical transmembrane segment at 769–787 (IIVFMMVMVIGNLVVLNLF) threads the bilayer. Over 788–973 (LALLLSSFSG…TCFAIVEHSY (186 aa)) the chain is Cytoplasmic. A disordered region spans residues 870-928 (PIANGESDDDDGNGSSEDEDDEGRDINMKKKNGDESSTCSTVDKPPEVEDLVEEEEEDL). The span at 875–892 (ESDDDDGNGSSEDEDDEG) shows a compositional bias: acidic residues. Positions 893–903 (RDINMKKKNGD) are enriched in basic and acidic residues. Residues 917 to 928 (VEDLVEEEEEDL) show a composition bias toward acidic residues. Residues 954 to 1269 (KGKAWWNFRK…KKYYNAMKKL (316 aa)) form an III repeat. The chain crosses the membrane as a helical span at residues 974–991 (FETFIIFMILLSSGALAF). The Extracellular segment spans residues 992-1004 (EDIYIEQRRMIKI). The chain crosses the membrane as a helical span at residues 1005 to 1023 (ILEYADQVFTYVFVVEMLL). Residues 1024–1037 (KWVAYGFKVYFTNA) are Cytoplasmic-facing. The chain crosses the membrane as a helical span at residues 1038-1056 (WCWLDFLIVDVSLISLTAN). At 1057 to 1064 (ILGYSELG) the chain is on the extracellular side. A helical transmembrane segment spans residues 1065–1083 (AIKSLRTLRALRPLRALSR). Residues 1084–1101 (FEGMRVVVVNALVGAIPS) are Cytoplasmic-facing. Residues 1102–1121 (IFNVLLVCLIFWLIFSIMGV) traverse the membrane as a helical segment. The Extracellular segment spans residues 1122 to 1173 (NLFAGKFYYCFNETSEEVFDHNVVNNKTDCYELMEFHPEVRWMNGKINFDNV). An intrachain disulfide couples C1131 to C1151. N1133 and N1147 each carry an N-linked (GlcNAc...) asparagine glycan. Residues 1174 to 1195 (GMGYLALLQVATFKGWMDIMYS) constitute an intramembrane region (pore-forming). Residues 1196-1212 (AVDSRAIESQPVYEANL) lie on the Extracellular side of the membrane. The chain crosses the membrane as a helical span at residues 1213–1234 (YMYIYFVIFIIFGSFFTLNLFI). The Cytoplasmic portion of the chain corresponds to 1235 to 1297 (GVIIDNFNQQ…LVFDFVTQQF (63 aa)). Residues 1253–1255 (IFM) form an important for rapid channel inactivation region. One copy of the IV repeat lies at 1278 to 1575 (IPRPTNCCQG…WEKFDPTASQ (298 aa)). Residues 1298-1315 (FDIFIMVMICLNMVTMMV) form a helical membrane-spanning segment. The Extracellular segment spans residues 1316–1326 (ETDDQSAEIEE). Residues 1327–1345 (ILFYINFAFIILFTGECVL) traverse the membrane as a helical segment. At 1346-1357 (KITALRYHYFSI) the chain is on the cytoplasmic side. A helical transmembrane segment spans residues 1358-1375 (GWNIFDFVVVILSILGIG). At 1376-1388 (LADLIEKYFVSPT) the chain is on the extracellular side. A helical transmembrane segment spans residues 1389-1405 (LFRVIRLARIGRVLRLI). Over 1406 to 1424 (RGAKGIRTLLFALMMSLPA) the chain is Cytoplasmic. Residues 1425-1442 (LFNIGLLLFLIMFIFSIF) traverse the membrane as a helical segment. At 1443–1464 (GMSNFAYVKKEVGIDDMMNFET) the chain is on the extracellular side. Residues 1465–1487 (FGNSIICMFMITTSAGWDGLLAP) constitute an intramembrane region (pore-forming). At 1488–1516 (ILNSPPDCDPDVDNPGSTTRGNCGNAAVG) the chain is on the extracellular side. A disulfide bridge links C1495 with C1510. The helical transmembrane segment at 1517 to 1539 (IVFFCSYIVMSFLVVVNMYIAII) threads the bilayer. Over 1540–1784 (LENFNVATEE…AADNLRESIV (245 aa)) the chain is Cytoplasmic. Positions 1669-1698 (EEVAASTIQRAYRSHILKRCVKQASYMYRD) constitute an IQ domain.

It belongs to the sodium channel (TC 1.A.1.10) family. Nav1.4/SCN4A subfamily. As to quaternary structure, voltage-gated sodium (Nav) channels consist of an ion-conducting alpha subunit which is functional on its own associated with regulatory beta subunits. Post-translationally, lacks the cysteine which covalently binds the conotoxin GVIIJ. This cysteine (position 719) is speculated in other sodium channel subunits alpha to be implied in covalent binding with the sodium channel subunit beta-2 or beta-4. Expressed in skeletal muscle, heart, brain, spinal cord, and eye.

Its subcellular location is the cell membrane. It catalyses the reaction Na(+)(in) = Na(+)(out). Functionally, pore-forming subunit of a voltage-gated sodium (Nav) channel that directly mediates the depolarizing phase of action potentials in excitable membranes. Navs, also called VGSCs (voltage-gated sodium channels) or VDSCs (voltage-dependent sodium channels), operate by switching between closed and open conformations depending on the voltage difference across the membrane. In the open conformation they allow Na(+) ions to selectively pass through the pore, along their electrochemical gradient. The influx of Na+ ions provokes membrane depolarization, initiating the propagation of electrical signals throughout cells and tissues. The polypeptide is Sodium channel protein type 4 subunit alpha B (scn4ab) (Danio rerio (Zebrafish)).